A 339-amino-acid polypeptide reads, in one-letter code: Replication factor C subunit 2 (339 aa).

An ATP-binding site is contributed by 48–55 (YGPPGTGK).

Belongs to the activator 1 small subunits family. In terms of assembly, heterotetramer of subunits RFC2, RFC3, RFC4 and RFC5 that can form a complex with RFC1. As to expression, expressed in roots, leaves, shoot apical meristem (SAM), flag leaves and panicles.

The protein localises to the nucleus. Its function is as follows. May be involved in DNA replication and thus regulate cell proliferation. The protein is Replication factor C subunit 2 (RFC2) of Oryza sativa subsp. japonica (Rice).